The following is a 205-amino-acid chain: Transcriptional regulator GfcR (205 aa).

This sequence belongs to the purine/pyrimidine phosphoribosyltransferase family. GfcR subfamily.

The polypeptide is Transcriptional regulator GfcR (Methanococcus maripaludis (strain C5 / ATCC BAA-1333)).